We begin with the raw amino-acid sequence, 155 residues long: SsrA-binding protein (155 aa).

This sequence belongs to the SmpB family.

It localises to the cytoplasm. In terms of biological role, required for rescue of stalled ribosomes mediated by trans-translation. Binds to transfer-messenger RNA (tmRNA), required for stable association of tmRNA with ribosomes. tmRNA and SmpB together mimic tRNA shape, replacing the anticodon stem-loop with SmpB. tmRNA is encoded by the ssrA gene; the 2 termini fold to resemble tRNA(Ala) and it encodes a 'tag peptide', a short internal open reading frame. During trans-translation Ala-aminoacylated tmRNA acts like a tRNA, entering the A-site of stalled ribosomes, displacing the stalled mRNA. The ribosome then switches to translate the ORF on the tmRNA; the nascent peptide is terminated with the 'tag peptide' encoded by the tmRNA and targeted for degradation. The ribosome is freed to recommence translation, which seems to be the essential function of trans-translation. The sequence is that of SsrA-binding protein from Streptococcus suis (strain 98HAH33).